Here is a 246-residue protein sequence, read N- to C-terminus: DNA repair protein RecO (246 aa).

This sequence belongs to the RecO family.

Involved in DNA repair and RecF pathway recombination. The sequence is that of DNA repair protein RecO from Proteus mirabilis (strain HI4320).